We begin with the raw amino-acid sequence, 305 residues long: tRNA pseudouridine synthase B (305 aa).

D39 functions as the Nucleophile in the catalytic mechanism.

It belongs to the pseudouridine synthase TruB family. Type 1 subfamily.

It carries out the reaction uridine(55) in tRNA = pseudouridine(55) in tRNA. Its function is as follows. Responsible for synthesis of pseudouridine from uracil-55 in the psi GC loop of transfer RNAs. In Staphylococcus aureus (strain bovine RF122 / ET3-1), this protein is tRNA pseudouridine synthase B.